The sequence spans 1180 residues: MITTIPKSINVTTIPLSGKILIEASAGTGKTFSLTILYIRLLLGITNHVKYKKGLLIKEILVVTFTEHTRAELEIRIKTYIKIFKTACIKKYSNNYVLSKLLSKITDFPKTIDILSKAENSIHELSIYTIHGFCYKILKLNKFNSELMLQNKILKHTYPLYLKISIKFWKYYFAFLSLDITSILLEYFNNPKTLLKEILPLLNKTQLISKLTKTKRKNIVQEYYILIKKIKLFKQKWANYSHLIHSEIIKTNVNKRIYTKSNLKRWINNITAWATQKQTKNFFIPSELKYFRYSFIIKKTTSEKILDDKFFKFIDTFLDSKFSLKEIFIIDASLEIKAMFMQEKIKNRYFEYDDLITFCWNMVNKNNFNISQTILKKYPVALIDEFQDTNNKQYNIFKKIYKKENLLILISDPKQAIYSFSGADITSYLQAKSNIKNQYFLDTNWRSSPKIINSINLLFSRLKNPFLTKNITFYPVKSSRINKTTKFEVNGKNQPALRFLLNKNKNISINEYKEWISITTAKYISYWISSGIKGNATITISNKVRTVNFSDIAIIVRNNLEAKTIQLELTKLNIQSLYLTSKNNIFQSKEILEILWILQAILNPNIERLLKRAMSTNIMSKNTKEIISIPNNHSYWIKLSQEFNQYLIFWNNYGILYVIQQLIINYNISNNNNLLHNFSPNIKNILYIGELLEEKSITIKNKFLLINWLKKNITQDFYLTKPKYIKPNYEKNNYIKIVSIHKSKGLEYPITIIPFATITFNKTVSTVEKICFNLNNTKIKKQKTLKIEKHKFSEDIRLLYVALTRSIIHCSIGISLAQTITQKKKIQKEKSKFKINVLRYIIQSGKNHISTKKLYTELSILKKNKNIEIISEIPNIIKKNFQIPTLNTNSQSLMHYQVSRKFNYNYNFTSYSQLKKNIKPSTMYSTLNTKKLFELNVKKKHCFENKILTPHTFPSGKIYGTLLHKILKNISFHKSINSNWLLKKLSEYNLDKRWCLILKNWMYSILYKNLDKNYNLRLSKLDSKNYIKELKFLLPIKKKLTALKLNNIFQTHQCSSLENKLCFHPIQGILSGSIDLVFLWKTKYFLVDYKSNWIGNSNQSYSQQNIKKIIKKHHYNFQLQLYSLVLHRYLKQHIKNYSFYNHFGGTYILFIRSINEIPSQNGIFYSIPNIEIIKKLEQIF.

The tract at residues 1–852 (MITTIPKSIN…QSGKNHISTK (852 aa)) is DNA-binding and helicase activity, interacts with RecC. The region spanning 3-448 (TTIPKSINVT…YFLDTNWRSS (446 aa)) is the UvrD-like helicase ATP-binding domain. Residue 24–31 (ASAGTGKT) participates in ATP binding. Residues 478-745 (SSRINKTTKF…KIVSIHKSKG (268 aa)) enclose the UvrD-like helicase C-terminal domain. A nuclease activity, interacts with RecD and RecA region spans residues 905–1180 (NYNFTSYSQL…EIIKKLEQIF (276 aa)). Residues His964, Asp1075, and Asp1088 each contribute to the Mg(2+) site. Asp1088 (for nuclease activity) is an active-site residue.

The protein belongs to the helicase family. UvrD subfamily. In terms of assembly, heterotrimer of RecB, RecC and RecD. All subunits contribute to DNA-binding. Interacts with RecA. Mg(2+) serves as cofactor.

The catalysed reaction is Exonucleolytic cleavage (in the presence of ATP) in either 5'- to 3'- or 3'- to 5'-direction to yield 5'-phosphooligonucleotides.. It catalyses the reaction Couples ATP hydrolysis with the unwinding of duplex DNA by translocating in the 3'-5' direction.. The enzyme catalyses ATP + H2O = ADP + phosphate + H(+). Functionally, a helicase/nuclease that prepares dsDNA breaks (DSB) for recombinational DNA repair. Binds to DSBs and unwinds DNA via a highly rapid and processive ATP-dependent bidirectional helicase activity. Unwinds dsDNA until it encounters a Chi (crossover hotspot instigator) sequence from the 3' direction. Cuts ssDNA a few nucleotides 3' to the Chi site. The properties and activities of the enzyme are changed at Chi. The Chi-altered holoenzyme produces a long 3'-ssDNA overhang and facilitates RecA-binding to the ssDNA for homologous DNA recombination and repair. Holoenzyme degrades any linearized DNA that is unable to undergo homologous recombination. In the holoenzyme this subunit contributes ATPase, 3'-5' helicase, exonuclease activity and loads RecA onto ssDNA. In Buchnera aphidicola subsp. Baizongia pistaciae (strain Bp), this protein is RecBCD enzyme subunit RecB.